The primary structure comprises 260 residues: MSATGEVLTPQGYISHHLTHLQVGSGFWTVNIDSMIFSVLLGALFIWSFRRVAVKATSGVPGKLQCFVEMLVEFVSGNVKDIFHGRNKVIAPLGLTVFVWIFLMNLMDLIPVDFIPHAAQLMGVPYLRVVPSADVNITMSMALGVFFLILYYSIKVKGIGGFVKELTLQPFNHPAAIPVNLILETVTLISKPVSLGLRLFGNMYAGELIFILIAGLLPWWSQWILSVPWAIFHILIITLQAFIFMVLTIVYLSMAQEDHG.

A run of 5 helical transmembrane segments spans residues 27–47, 90–110, 132–154, 208–228, and 230–250; these read FWTV…LFIW, IAPL…MDLI, SADV…YYSI, LIFI…LSVP, and AIFH…LTIV.

Belongs to the ATPase A chain family. F-type ATPases have 2 components, CF(1) - the catalytic core - and CF(0) - the membrane proton channel. CF(1) has five subunits: alpha(3), beta(3), gamma(1), delta(1), epsilon(1). CF(0) has three main subunits: a(1), b(2) and c(9-12). The alpha and beta chains form an alternating ring which encloses part of the gamma chain. CF(1) is attached to CF(0) by a central stalk formed by the gamma and epsilon chains, while a peripheral stalk is formed by the delta and b chains.

It is found in the cell inner membrane. Its function is as follows. Key component of the proton channel; it plays a direct role in the translocation of protons across the membrane. This chain is ATP synthase subunit a, found in Aeromonas hydrophila subsp. hydrophila (strain ATCC 7966 / DSM 30187 / BCRC 13018 / CCUG 14551 / JCM 1027 / KCTC 2358 / NCIMB 9240 / NCTC 8049).